Reading from the N-terminus, the 396-residue chain is NADH-quinone oxidoreductase subunit D 1 (396 aa).

The protein belongs to the complex I 49 kDa subunit family. NDH-1 is composed of 14 different subunits. Subunits NuoB, C, D, E, F, and G constitute the peripheral sector of the complex.

The protein localises to the cell inner membrane. The enzyme catalyses a quinone + NADH + 5 H(+)(in) = a quinol + NAD(+) + 4 H(+)(out). NDH-1 shuttles electrons from NADH, via FMN and iron-sulfur (Fe-S) centers, to quinones in the respiratory chain. The immediate electron acceptor for the enzyme in this species is believed to be ubiquinone. Couples the redox reaction to proton translocation (for every two electrons transferred, four hydrogen ions are translocated across the cytoplasmic membrane), and thus conserves the redox energy in a proton gradient. This Rhizobium etli (strain CIAT 652) protein is NADH-quinone oxidoreductase subunit D 1.